The sequence spans 77 residues: Small ribosomal subunit protein bS20 (77 aa).

The protein belongs to the bacterial ribosomal protein bS20 family.

Functionally, binds directly to 16S ribosomal RNA. The polypeptide is Small ribosomal subunit protein bS20 (Streptococcus uberis (strain ATCC BAA-854 / 0140J)).